Consider the following 268-residue polypeptide: Phosphate import ATP-binding protein PstB 2 (268 aa).

The ABC transporter domain occupies M22–I263. Position 54–61 (G54–S61) interacts with ATP.

This sequence belongs to the ABC transporter superfamily. Phosphate importer (TC 3.A.1.7) family. In terms of assembly, the complex is composed of two ATP-binding proteins (PstB), two transmembrane proteins (PstC and PstA) and a solute-binding protein (PstS).

The protein resides in the cell inner membrane. It catalyses the reaction phosphate(out) + ATP + H2O = ADP + 2 phosphate(in) + H(+). Part of the ABC transporter complex PstSACB involved in phosphate import. Responsible for energy coupling to the transport system. In Rhizobium johnstonii (strain DSM 114642 / LMG 32736 / 3841) (Rhizobium leguminosarum bv. viciae), this protein is Phosphate import ATP-binding protein PstB 2.